The chain runs to 665 residues: MLPEEKNTFYITTPIYYPSGKAHIGHAYTTVAGDAMARYKRLKGYDVFYLTGTDEHGQKIQAKAKERGISEQEYVDEIAEGFQELWKKLEISNTDFIRTTQDRHKTSVEKIFEQLLEQGDIYLGEYEGWYSVSDEEYFTETQLEEVYKDENGKVIGGKAPSGNEVELVKEESYFFRMSKYADRLVEYYNSHPEFILPESRKNEMINNFIKPGLEDLAVSRTTFDWGIKVPGNPKHVVYVWIDALSNYITALGYNTDNDTKFQKYWPADVQIVGKEIVRFHTIYWPIMLMALDLPLPKMVFGHGWILMKDGKMSKSKGNVVDPYMLIDRYGLDALRYYLLREVPFGSDGLFTPEDFVDRVNFDLANDLGNLLNRTVAMINKYFDGEIPAYQGNVTEFDQTLVDFKNNVVKEYEGSMDHMQFSVALNQLWSLISRTNKYIDETAPWTLAKDEDKRTELASVMTHLAENLRIIAVLLQPFLTRTPGEIFLQLGLQEENLKKWDSIYGYGEIPAGTTVVKKGTPIFPRLEAEVEVTYIQDEMKGSAPAPAKEAAEVEALETPQIGIEDFDKIDLRVAEVKQVDKVKKADKLLCFQLDLGEGKLRQVLSGIAEFYQPEELIGKKVIVVSNLKPVKLRGLMSEGMILSGEKDGKLSVIEASSALPNGAKVK.

Positions 16-26 (YYPSGKAHIGH) match the 'HIGH' region motif. The 'KMSKS' region motif lies at 311–315 (KMSKS). Lys314 serves as a coordination point for ATP. In terms of domain architecture, tRNA-binding spans 564-665 (DFDKIDLRVA…SALPNGAKVK (102 aa)).

Belongs to the class-I aminoacyl-tRNA synthetase family. MetG type 2B subfamily. As to quaternary structure, homodimer.

It localises to the cytoplasm. It catalyses the reaction tRNA(Met) + L-methionine + ATP = L-methionyl-tRNA(Met) + AMP + diphosphate. Functionally, is required not only for elongation of protein synthesis but also for the initiation of all mRNA translation through initiator tRNA(fMet) aminoacylation. This chain is Methionine--tRNA ligase, found in Listeria monocytogenes serotype 4b (strain F2365).